A 127-amino-acid polypeptide reads, in one-letter code: NADPH-dependent 7-cyano-7-deazaguanine reductase (127 aa).

Cysteine 40 functions as the Thioimide intermediate in the catalytic mechanism. Catalysis depends on aspartate 47, which acts as the Proton donor. Residues 62–64 and 81–82 each bind substrate; these read VEL and HE.

This sequence belongs to the GTP cyclohydrolase I family. QueF type 1 subfamily.

Its subcellular location is the cytoplasm. It catalyses the reaction 7-aminomethyl-7-carbaguanine + 2 NADP(+) = 7-cyano-7-deazaguanine + 2 NADPH + 3 H(+). It participates in tRNA modification; tRNA-queuosine biosynthesis. In terms of biological role, catalyzes the NADPH-dependent reduction of 7-cyano-7-deazaguanine (preQ0) to 7-aminomethyl-7-deazaguanine (preQ1). This is NADPH-dependent 7-cyano-7-deazaguanine reductase from Campylobacter jejuni subsp. jejuni serotype O:2 (strain ATCC 700819 / NCTC 11168).